Consider the following 504-residue polypeptide: Maturase K (504 aa).

Belongs to the intron maturase 2 family. MatK subfamily.

It localises to the plastid. The protein localises to the chloroplast. Functionally, usually encoded in the trnK tRNA gene intron. Probably assists in splicing its own and other chloroplast group II introns. The chain is Maturase K from Capsella bursa-pastoris (Shepherd's purse).